The sequence spans 981 residues: Anoctamin-3 (981 aa).

Positions 1–28 (MVHHSGSIQSFKQQKGMNISKSEITTEA) are enriched in polar residues. 2 disordered regions span residues 1–32 (MVHHSGSIQSFKQQKGMNISKSEITTEASLKP) and 67–87 (PTSVTFLSADKPEHVTSEESR). The Cytoplasmic segment spans residues 1-403 (MVHHSGSIQS…LYFAWLGWYT (403 aa)). Residues 76 to 87 (DKPEHVTSEESR) are compositionally biased toward basic and acidic residues. A helical membrane pass occupies residues 404 to 424 (GMLIPAAVVGLCVFFYGLVTM). N-linked (GlcNAc...) asparagine glycosylation is found at Asn-425, Asn-448, and Asn-455. Topologically, residues 425-469 (NESQVSQEICKATEVFMCPLCDKNCSLQRLNDSCIYAKVTYLFDN) are extracellular. Residues 470 to 490 (GGTVFFAIFMAIWATVFLEFW) traverse the membrane as a helical segment. Topologically, residues 491-550 (KRRRSILTYTWDLIEWEEEEETLRPQFEAKYYRMEVINPITGKPEPHQPSSDKVTRLLVS) are cytoplasmic. The helical transmembrane segment at 551-571 (VSGIFFMISLVITAVFAVVVY) threads the bilayer. At 572–592 (RLVVMEQFASFKWNFVKQHWQ) the chain is on the extracellular side. A helical membrane pass occupies residues 593-613 (FATSGAAVCINFIIIMLLNLA). Over 614-640 (YEKIAYLLTNLEYPRTESEWENSFALK) the chain is Cytoplasmic. Residues 641 to 661 (MFLFQFVNLNSSIFYIAFFLG) form a helical membrane-spanning segment. The Extracellular portion of the chain corresponds to 662-761 (RFVGHPGKYN…MDEYLEMVLQ (100 aa)). The chain crosses the membrane as a helical span at residues 762 to 782 (FGFTTIFVAAFPLAPLLALLN). The Cytoplasmic segment spans residues 783-810 (NIIEIRLDAYKFVTQWRRPLPARATDIG). A helical transmembrane segment spans residues 811-831 (IWLGILEGIGILAVITNAFVI). Residues 832–914 (AITSDYIPRF…QYWHILAARL (83 aa)) are Extracellular-facing. Asn-866 is a glycosylation site (N-linked (GlcNAc...) asparagine). A helical membrane pass occupies residues 915–935 (AFIIVFEHLVFGIKSFIAYLI). Residues 936–981 (PDIPKGLRERIRREKYLVQEMMYEAELEHLQQQRRKSGQPIHHEWP) lie on the Cytoplasmic side of the membrane.

The protein belongs to the anoctamin family. In terms of assembly, interacts with KCNT1/Slack. In terms of tissue distribution, predominantly expressed in neuronal tissues. Expressed in brain.

It localises to the cell membrane. The enzyme catalyses a 1,2-diacyl-sn-glycero-3-phosphocholine(in) = a 1,2-diacyl-sn-glycero-3-phosphocholine(out). The catalysed reaction is a beta-D-galactosyl-(1&lt;-&gt;1')-N-acylsphing-4-enine(out) = a beta-D-galactosyl-(1&lt;-&gt;1')-N-acylsphing-4-enine(in). In terms of biological role, has calcium-dependent phospholipid scramblase activity; scrambles phosphatidylcholine and galactosylceramide. Does not exhibit calcium-activated chloride channel (CaCC) activity. Seems to act as potassium channel regulator and may inhibit pain signaling; can facilitate KCNT1/Slack channel activity by promoting its full single-channel conductance at very low sodium concentrations and by increasing its sodium sensitivity. This Mus musculus (Mouse) protein is Anoctamin-3.